We begin with the raw amino-acid sequence, 75 residues long: Small ribosomal subunit protein bS18 (75 aa).

This sequence belongs to the bacterial ribosomal protein bS18 family. In terms of assembly, part of the 30S ribosomal subunit. Forms a tight heterodimer with protein bS6.

Its function is as follows. Binds as a heterodimer with protein bS6 to the central domain of the 16S rRNA, where it helps stabilize the platform of the 30S subunit. The sequence is that of Small ribosomal subunit protein bS18 from Shewanella frigidimarina (strain NCIMB 400).